A 122-amino-acid chain; its full sequence is Large ribosomal subunit protein uL18 (122 aa).

The interval 1 to 27 (MSNLSRKQQTQKRHRRLRRHLNGTAQR) is disordered. A compositionally biased stretch (basic residues) spans 9–21 (QTQKRHRRLRRHL).

This sequence belongs to the universal ribosomal protein uL18 family. In terms of assembly, part of the 50S ribosomal subunit; part of the 5S rRNA/L5/L18/L25 subcomplex. Contacts the 5S and 23S rRNAs.

Functionally, this is one of the proteins that bind and probably mediate the attachment of the 5S RNA into the large ribosomal subunit, where it forms part of the central protuberance. The protein is Large ribosomal subunit protein uL18 of Prochlorococcus marinus (strain MIT 9303).